The chain runs to 157 residues: Ribosomal RNA large subunit methyltransferase H (157 aa).

Residues Leu-73, Gly-105, and 124 to 129 (MSKMTF) each bind S-adenosyl-L-methionine.

The protein belongs to the RNA methyltransferase RlmH family. Homodimer.

It is found in the cytoplasm. The enzyme catalyses pseudouridine(1915) in 23S rRNA + S-adenosyl-L-methionine = N(3)-methylpseudouridine(1915) in 23S rRNA + S-adenosyl-L-homocysteine + H(+). Specifically methylates the pseudouridine at position 1915 (m3Psi1915) in 23S rRNA. The protein is Ribosomal RNA large subunit methyltransferase H of Bacteroides fragilis (strain ATCC 25285 / DSM 2151 / CCUG 4856 / JCM 11019 / LMG 10263 / NCTC 9343 / Onslow / VPI 2553 / EN-2).